The following is a 120-amino-acid chain: UPF0145 protein Mboo_1021 (120 aa).

This sequence belongs to the UPF0145 family.

In Methanoregula boonei (strain DSM 21154 / JCM 14090 / 6A8), this protein is UPF0145 protein Mboo_1021.